We begin with the raw amino-acid sequence, 294 residues long: Foldase protein PrsA 1 (294 aa).

The signal sequence occupies residues 1-21 (MTKLKKVMISVIAATLLLLAG). C22 is lipidated: N-palmitoyl cysteine. C22 carries the S-diacylglycerol cysteine lipid modification. Residues 135-226 (EPDITVRHIL…YGYHLIQLVK (92 aa)) enclose the PpiC domain.

Belongs to the PrsA family.

The protein resides in the cell membrane. It carries out the reaction [protein]-peptidylproline (omega=180) = [protein]-peptidylproline (omega=0). Functionally, plays a major role in protein secretion by helping the post-translocational extracellular folding of several secreted proteins. The protein is Foldase protein PrsA 1 of Listeria monocytogenes serotype 4b (strain F2365).